Here is a 284-residue protein sequence, read N- to C-terminus: Bifunctional protein FolD (284 aa).

Residues 166-168 (GAS) and Ile-232 each bind NADP(+).

The protein belongs to the tetrahydrofolate dehydrogenase/cyclohydrolase family. Homodimer.

It carries out the reaction (6R)-5,10-methylene-5,6,7,8-tetrahydrofolate + NADP(+) = (6R)-5,10-methenyltetrahydrofolate + NADPH. It catalyses the reaction (6R)-5,10-methenyltetrahydrofolate + H2O = (6R)-10-formyltetrahydrofolate + H(+). The protein operates within one-carbon metabolism; tetrahydrofolate interconversion. Catalyzes the oxidation of 5,10-methylenetetrahydrofolate to 5,10-methenyltetrahydrofolate and then the hydrolysis of 5,10-methenyltetrahydrofolate to 10-formyltetrahydrofolate. The chain is Bifunctional protein FolD from Glaesserella parasuis serovar 5 (strain SH0165) (Haemophilus parasuis).